The chain runs to 400 residues: Elongation factor Tu (400 aa).

In terms of domain architecture, tr-type G spans 10 to 209 (KPHVNVGTIG…AVDSYIPTPE (200 aa)). The G1 stretch occupies residues 19-26 (GHVDHGKT). 19-26 (GHVDHGKT) lines the GTP pocket. Threonine 26 contributes to the Mg(2+) binding site. The G2 stretch occupies residues 60–64 (GITIS). The segment at 81-84 (DCPG) is G3. GTP-binding positions include 81 to 85 (DCPGH) and 136 to 139 (NKAD). Positions 136–139 (NKAD) are G4. The tract at residues 174–176 (SGL) is G5.

This sequence belongs to the TRAFAC class translation factor GTPase superfamily. Classic translation factor GTPase family. EF-Tu/EF-1A subfamily. In terms of assembly, monomer.

It localises to the cytoplasm. It carries out the reaction GTP + H2O = GDP + phosphate + H(+). Its function is as follows. GTP hydrolase that promotes the GTP-dependent binding of aminoacyl-tRNA to the A-site of ribosomes during protein biosynthesis. In Desulfitobacterium hafniense (strain DSM 10664 / DCB-2), this protein is Elongation factor Tu.